A 297-amino-acid chain; its full sequence is Probable endonuclease 4 (297 aa).

The tract at residues 1–21 is disordered; it reads MPEIGAHVSAAGGPQRAPERG. Residues His67, His107, Glu145, Asp179, His182, His216, Asp229, His231, and Glu261 each coordinate Zn(2+).

The protein belongs to the AP endonuclease 2 family. Zn(2+) serves as cofactor.

The catalysed reaction is Endonucleolytic cleavage to 5'-phosphooligonucleotide end-products.. In terms of biological role, endonuclease IV plays a role in DNA repair. It cleaves phosphodiester bonds at apurinic or apyrimidinic (AP) sites, generating a 3'-hydroxyl group and a 5'-terminal sugar phosphate. This is Probable endonuclease 4 from Halorhodospira halophila (strain DSM 244 / SL1) (Ectothiorhodospira halophila (strain DSM 244 / SL1)).